The following is a 162-amino-acid chain: Heat shock protein beta-6 (162 aa).

The involved in stabilization of the HSPB1:HSBP6 heterodimer stretch occupies residues 1-72 (MEIPVPVQPS…PTAQVSTDSG (72 aa)). A Phosphoserine modification is found at S16. The sHSP domain occupies 56–162 (RAPSVALPTA…AQLPSPPAAK (107 aa)). The residue at position 66 (Q66) is a Deamidated glutamine. Residue S157 is modified to Phosphoserine.

The protein belongs to the small heat shock protein (HSP20) family. As to quaternary structure, homodimer. Small heat shock proteins form high molecular mass oligomers containing variable number of monomers; these oligomers display a very flexible quaternary structure easily exchanging their subunits. Heterooligomer with HSPB1; formed through oligomerization of HSPB1:HSBP6 dimers; subunit exchange leads to formation of at least two different heterooligomeric complexes, differing in variable quantities of HSPB1 and HSPB6 homodimers in addition to HSPB1:HSPB6 heterodimers. Heterooligomer with CRYAB; large heterooligomers consist of CRYAB homodimers and HSPB5:HSPB6 heterodimers but lacking HSPB6 homodimers. Interacts with BAG3. Interacts (phosphorylated) with YWHAZ. Interacts with PDE4A and PDE4D; required for maintenance of the non-phosphorylated state of HSPB6 under basal conditions. Interacts with KDR. Interacts with PRKD1. In terms of processing, phosphorylated at Ser-16 by PKA and probably PKD1K; required to protect cardiomyocytes from apoptosis.

The protein resides in the cytoplasm. It is found in the nucleus. It localises to the secreted. In terms of biological role, small heat shock protein which functions as a molecular chaperone probably maintaining denatured proteins in a folding-competent state. Seems to have versatile functions in various biological processes. Plays a role in regulating muscle function such as smooth muscle vasorelaxation and cardiac myocyte contractility. May regulate myocardial angiogenesis implicating KDR. Overexpression mediates cardioprotection and angiogenesis after induced damage. Stabilizes monomeric YWHAZ thereby supporting YWHAZ chaperone-like activity. The protein is Heat shock protein beta-6 (Hspb6) of Mus musculus (Mouse).